The following is a 382-amino-acid chain: Dual-specificity RNA methyltransferase RlmN (382 aa).

The active-site Proton acceptor is the E94. The region spanning E100–D336 is the Radical SAM core domain. The cysteines at positions 107 and 342 are disulfide-linked. C114, C118, and C121 together coordinate [4Fe-4S] cluster. Residues G168–E169, S200, S222–H224, and N299 each bind S-adenosyl-L-methionine. Catalysis depends on C342, which acts as the S-methylcysteine intermediate.

It belongs to the radical SAM superfamily. RlmN family. [4Fe-4S] cluster serves as cofactor.

Its subcellular location is the cytoplasm. It carries out the reaction adenosine(2503) in 23S rRNA + 2 reduced [2Fe-2S]-[ferredoxin] + 2 S-adenosyl-L-methionine = 2-methyladenosine(2503) in 23S rRNA + 5'-deoxyadenosine + L-methionine + 2 oxidized [2Fe-2S]-[ferredoxin] + S-adenosyl-L-homocysteine. The enzyme catalyses adenosine(37) in tRNA + 2 reduced [2Fe-2S]-[ferredoxin] + 2 S-adenosyl-L-methionine = 2-methyladenosine(37) in tRNA + 5'-deoxyadenosine + L-methionine + 2 oxidized [2Fe-2S]-[ferredoxin] + S-adenosyl-L-homocysteine. Its function is as follows. Specifically methylates position 2 of adenine 2503 in 23S rRNA and position 2 of adenine 37 in tRNAs. m2A2503 modification seems to play a crucial role in the proofreading step occurring at the peptidyl transferase center and thus would serve to optimize ribosomal fidelity. This is Dual-specificity RNA methyltransferase RlmN from Legionella pneumophila subsp. pneumophila (strain Philadelphia 1 / ATCC 33152 / DSM 7513).